Here is an 877-residue protein sequence, read N- to C-terminus: DNA mismatch repair protein MutS (877 aa).

ATP is bound at residue 630 to 637; it reads GPNMAGKS.

This sequence belongs to the DNA mismatch repair MutS family.

In terms of biological role, this protein is involved in the repair of mismatches in DNA. It is possible that it carries out the mismatch recognition step. This protein has a weak ATPase activity. The chain is DNA mismatch repair protein MutS from Ruegeria pomeroyi (strain ATCC 700808 / DSM 15171 / DSS-3) (Silicibacter pomeroyi).